Consider the following 161-residue polypeptide: 2-C-methyl-D-erythritol 2,4-cyclodiphosphate synthase (161 aa).

Positions 10 and 12 each coordinate a divalent metal cation. 4-CDP-2-C-methyl-D-erythritol 2-phosphate-binding positions include 10-12 and 36-37; these read DVH and HS. An a divalent metal cation-binding site is contributed by His-44. 4-CDP-2-C-methyl-D-erythritol 2-phosphate contacts are provided by residues 58–60, 63–67, 102–108, 134–137, Phe-141, and Arg-144; these read DIG, FPDTD, AQAPKMA, and TTTE.

Belongs to the IspF family. In terms of assembly, homotrimer. A divalent metal cation serves as cofactor.

The catalysed reaction is 4-CDP-2-C-methyl-D-erythritol 2-phosphate = 2-C-methyl-D-erythritol 2,4-cyclic diphosphate + CMP. It functions in the pathway isoprenoid biosynthesis; isopentenyl diphosphate biosynthesis via DXP pathway; isopentenyl diphosphate from 1-deoxy-D-xylulose 5-phosphate: step 4/6. Functionally, involved in the biosynthesis of isopentenyl diphosphate (IPP) and dimethylallyl diphosphate (DMAPP), two major building blocks of isoprenoid compounds. Catalyzes the conversion of 4-diphosphocytidyl-2-C-methyl-D-erythritol 2-phosphate (CDP-ME2P) to 2-C-methyl-D-erythritol 2,4-cyclodiphosphate (ME-CPP) with a corresponding release of cytidine 5-monophosphate (CMP). The chain is 2-C-methyl-D-erythritol 2,4-cyclodiphosphate synthase from Shewanella sediminis (strain HAW-EB3).